The following is a 420-amino-acid chain: Serine hydroxymethyltransferase (420 aa).

Residues L123 and 127–129 contribute to the (6S)-5,6,7,8-tetrahydrofolate site; that span reads GHL. An N6-(pyridoxal phosphate)lysine modification is found at K232. Position 357 to 359 (357 to 359) interacts with (6S)-5,6,7,8-tetrahydrofolate; that stretch reads SPF.

It belongs to the SHMT family. In terms of assembly, homodimer. Requires pyridoxal 5'-phosphate as cofactor.

It localises to the cytoplasm. The enzyme catalyses (6R)-5,10-methylene-5,6,7,8-tetrahydrofolate + glycine + H2O = (6S)-5,6,7,8-tetrahydrofolate + L-serine. Its pathway is one-carbon metabolism; tetrahydrofolate interconversion. The protein operates within amino-acid biosynthesis; glycine biosynthesis; glycine from L-serine: step 1/1. Catalyzes the reversible interconversion of serine and glycine with tetrahydrofolate (THF) serving as the one-carbon carrier. This reaction serves as the major source of one-carbon groups required for the biosynthesis of purines, thymidylate, methionine, and other important biomolecules. Also exhibits THF-independent aldolase activity toward beta-hydroxyamino acids, producing glycine and aldehydes, via a retro-aldol mechanism. The polypeptide is Serine hydroxymethyltransferase (Streptococcus pyogenes serotype M12 (strain MGAS2096)).